A 147-amino-acid chain; its full sequence is Globin, major polymeric component P1 (147 aa).

Residues 2-146 (HLTADQVAAL…ISDACIAGLQ (145 aa)) form the Globin domain. His-96 is a heme b binding site.

It belongs to the globin family. As to quaternary structure, polymer.

The chain is Globin, major polymeric component P1 from Glycera dibranchiata (Bloodworm).